The sequence spans 141 residues: Large ribosomal subunit protein uL11 (141 aa).

The protein belongs to the universal ribosomal protein uL11 family. In terms of assembly, part of the ribosomal stalk of the 50S ribosomal subunit. Interacts with L10 and the large rRNA to form the base of the stalk. L10 forms an elongated spine to which L12 dimers bind in a sequential fashion forming a multimeric L10(L12)X complex. Post-translationally, one or more lysine residues are methylated.

Its function is as follows. Forms part of the ribosomal stalk which helps the ribosome interact with GTP-bound translation factors. The protein is Large ribosomal subunit protein uL11 of Trichlorobacter lovleyi (strain ATCC BAA-1151 / DSM 17278 / SZ) (Geobacter lovleyi).